The chain runs to 31 residues: Small protein MgtS (31 aa).

Over 1 to 4 (MLGN) the chain is Periplasmic. The helical transmembrane segment at 5–25 (MNVFMAVLGIILFSGFLAAYF) threads the bilayer. Over 26-31 (SHKWDD) the chain is Cytoplasmic.

In terms of assembly, interacts with MgtA.

It is found in the cell inner membrane. Functionally, modulates intracellular Mg(2+) levels to maintain cellular integrity upon Mg(2+) limitation. Acts by binding and stabilizing the Mg(2+) transporter MgtA, thereby leading to increased intracellular level of Mg(2+). May inhibit FtsH proteolysis of MgtA. The sequence is that of Small protein MgtS from Escherichia coli (strain K12).